A 178-amino-acid polypeptide reads, in one-letter code: Large ribosomal subunit protein uL6 (178 aa).

Belongs to the universal ribosomal protein uL6 family. In terms of assembly, part of the 50S ribosomal subunit.

Functionally, this protein binds to the 23S rRNA, and is important in its secondary structure. It is located near the subunit interface in the base of the L7/L12 stalk, and near the tRNA binding site of the peptidyltransferase center. In Corynebacterium aurimucosum (strain ATCC 700975 / DSM 44827 / CIP 107346 / CN-1) (Corynebacterium nigricans), this protein is Large ribosomal subunit protein uL6.